Reading from the N-terminus, the 137-residue chain is Protein yippee-like F37A8.5 (137 aa).

Residues 1–20 (MHFRMKVLENSSKHNTPKKQ) are disordered. Residues 32 to 129 (RCYSCIHCRA…IELAHMVKDN (98 aa)) enclose the Yippee domain. Zn(2+)-binding residues include C36, C39, C92, and C95.

This sequence belongs to the yippee family.

In Caenorhabditis elegans, this protein is Protein yippee-like F37A8.5.